The chain runs to 696 residues: Solute carrier family 53 member 1 (696 aa).

Residues 1 to 228 (MKFAEHLSAH…RVPPLGAAQP (228 aa)) are Cytoplasmic-facing. The region spanning 2 to 224 (KFAEHLSAHI…MKRLRVPPLG (223 aa)) is the SPX domain. Positions 158–165 (KILKKHDK) are important for inositol polyphosphate binding. A helical membrane pass occupies residues 229–259 (APAWTTFRVGLFCGIFIVLNITLVLAAVFKL). At 260–264 (ETDRS) the chain is on the extracellular side. The chain crosses the membrane as a helical span at residues 265–296 (IWPLIRIYRGGFLLIEFLFLLGINTYGWRQAG). At 297–309 (VNHVLIFELNPRS) the chain is on the cytoplasmic side. Residues 310–337 (NLSHQHLFEIAGFLGILWCLSLLACFFA) form a helical membrane-spanning segment. The Extracellular segment spans residues 338-343 (PISVIP). The helical transmembrane segment at 344-365 (TYVYPLALYGFMVFFLINPTKT) threads the bilayer. Positions 366 to 383 (FYYKSRFWLLKLLFRVFT) form an intramembrane region, helical. At 384–388 (APFHK) the chain is on the cytoplasmic side. Residues 389–422 (VGFADFWLADQLNSLSVILMDLEYMICFYSLELK) traverse the membrane as a discontinuously helical segment. The phosphate site is built by D398 and N401. Residues 423–429 (WDESKGL) are Extracellular-facing. A discontinuously helical membrane pass occupies residues 430 to 471 (LPNNSEESGICHKYTYGVRAIVQCIPAWLRFIQCLRRYRDTK). The EXS domain maps to 439–643 (ICHKYTYGVR…LNADDQTLLE (205 aa)). Position 472 (R472) is a topological domain, cytoplasmic. The chain crosses the membrane as a helical span at residues 473–503 (AFPHLVNAGKYSTTFFMVTFAALYSTHKERG). Positions 482 and 483 each coordinate phosphate. At 504-506 (HSD) the chain is on the extracellular side. A helical membrane pass occupies residues 507–534 (TMVFFYLWIVFYIISSCYTLIWDLKMDW). The Cytoplasmic segment spans residues 535-553 (GLFDKNAGENTFLREEIVY). Residues 554–585 (PQKAYYYCAIIEDVILRFAWTIQISITSTTLL) traverse the membrane as a discontinuously helical segment. Position 570 (R570) interacts with phosphate. Topologically, residues 586–587 (PH) are extracellular. Residues 588–626 (SGDIIATVFAPLEVFRRFVWNFFRLENEHLNNCGEFRAV) traverse the membrane as a helical segment. R603 and R604 together coordinate phosphate. Residues 627 to 696 (RDISVAPLNA…IEDTDDEANT (70 aa)) are Cytoplasmic-facing. The residue at position 668 (S668) is a Phosphoserine. A disordered region spans residues 673–696 (RLASQSKARDTKVLIEDTDDEANT). A Phosphothreonine modification is found at T690.

The protein belongs to the SYG1 (TC 2.A.94) family. Homodimer. Widely expressed. Detected in spleen, lymph node, thymus, leukocytes, bone marrow, heart, kidney, pancreas and skeletal muscle.

It localises to the cell membrane. It catalyses the reaction phosphate(in) = phosphate(out). With respect to regulation, allosterically activated by inositol hexakisphosphate (Ins6P). Functionally, inorganic ion transporter that mediates phosphate ion export across plasma membrane. Plays a major role in phosphate homeostasis, preventing intracellular phosphate accumulation and possible calcium phosphate precipitation, ultimately preserving calcium signaling. Binds inositol hexakisphosphate (Ins6P) and similar inositol polyphosphates, such as 5-diphospho-inositol pentakisphosphate (5-InsP7), which are important intracellular signaling molecules involved in regulation of phosphate flux. The protein is Solute carrier family 53 member 1 of Homo sapiens (Human).